The primary structure comprises 357 residues: RNA 3'-terminal phosphate cyclase (357 aa).

Residues glutamine 102 and 293 to 296 (HMGD) each bind ATP. Histidine 319 serves as the catalytic Tele-AMP-histidine intermediate.

It belongs to the RNA 3'-terminal cyclase family. Type 1 subfamily.

It localises to the cytoplasm. The enzyme catalyses a 3'-end 3'-phospho-ribonucleotide-RNA + ATP = a 3'-end 2',3'-cyclophospho-ribonucleotide-RNA + AMP + diphosphate. In terms of biological role, catalyzes the conversion of 3'-phosphate to a 2',3'-cyclic phosphodiester at the end of RNA. The mechanism of action of the enzyme occurs in 3 steps: (A) adenylation of the enzyme by ATP; (B) transfer of adenylate to an RNA-N3'P to produce RNA-N3'PP5'A; (C) and attack of the adjacent 2'-hydroxyl on the 3'-phosphorus in the diester linkage to produce the cyclic end product. The biological role of this enzyme is unknown but it is likely to function in some aspects of cellular RNA processing. This Staphylothermus marinus (strain ATCC 43588 / DSM 3639 / JCM 9404 / F1) protein is RNA 3'-terminal phosphate cyclase.